A 798-amino-acid polypeptide reads, in one-letter code: Transferrin receptor protein 2 (798 aa).

Residues 1 to 81 are Cytoplasmic-facing; the sequence is MEQRWGLLRR…WAAAGRKAAP (81 aa). The Endocytosis signal motif lies at 23–26; sequence YRRV. A helical; Signal-anchor for type II membrane protein transmembrane segment spans residues 82 to 102; that stretch reads YLVLITLLIFTGAFLLGYVAF. The Extracellular segment spans residues 103-798; the sequence is RGSCQACGDS…GDVWNIDNNF (696 aa). Asparagine 235, asparagine 334, and asparagine 535 each carry an N-linked (GlcNAc...) asparagine glycan.

The protein belongs to the peptidase M28 family. M28B subfamily. As to expression, predominantly expressed in liver. Also expressed in kidney, spleen, brain, lung, heart and muscle with very low expression in kidney, muscle and heart.

It localises to the cell membrane. The protein resides in the cytoplasm. Mediates cellular uptake of transferrin-bound iron in a non-iron dependent manner. May be involved in iron metabolism, hepatocyte function and erythrocyte differentiation. This is Transferrin receptor protein 2 (Tfr2) from Mus musculus (Mouse).